A 392-amino-acid polypeptide reads, in one-letter code: B2 bradykinin receptor (392 aa).

At M1–Q61 the chain is on the extracellular side. N29 and N40 each carry an N-linked (GlcNAc...) asparagine glycan. The chain crosses the membrane as a helical span at residues A62–L85. The Cytoplasmic portion of the chain corresponds to H86–E94. The chain crosses the membrane as a helical span at residues I95–A119. Topologically, residues N120–R132 are extracellular. C131 and C212 are disulfide-bonded. The chain crosses the membrane as a helical span at residues V133–I154. The Cytoplasmic segment spans residues D155–K176. Y157 carries the phosphotyrosine modification. A helical membrane pass occupies residues L177–M199. Over R200–E222 the chain is Extracellular. N-linked (GlcNAc...) asparagine glycosylation occurs at N208. The chain crosses the membrane as a helical span at residues V223–L249. The Cytoplasmic portion of the chain corresponds to Q250–K268. A helical membrane pass occupies residues A269 to L293. Topologically, residues D294–D312 are extracellular. Residues V313–V336 form a helical membrane-spanning segment. Over G337–Q392 the chain is Cytoplasmic. Phosphotyrosine is present on Y348. The S-palmitoyl cysteine moiety is linked to residue C352. S367 is modified (phosphoserine). Phosphothreonine is present on T370. Phosphoserine; by GRK6 occurs at positions 374 and 376.

This sequence belongs to the G-protein coupled receptor 1 family. Bradykinin receptor subfamily. BDKRB2 sub-subfamily. Forms a complex with PECAM1 and GNAQ. Interacts with PECAM1.

Its subcellular location is the cell membrane. In terms of biological role, receptor for bradykinin. It is associated with G proteins that activate a phosphatidylinositol-calcium second messenger system. The polypeptide is B2 bradykinin receptor (Bdkrb2) (Mus musculus (Mouse)).